Reading from the N-terminus, the 610-residue chain is Elongation factor 4 (610 aa).

Residues 11–193 (EKIRNFSIIA…QIVEKVPAPT (183 aa)) form the tr-type G domain. GTP contacts are provided by residues 23-28 (DHGKST) and 140-143 (NKID).

It belongs to the TRAFAC class translation factor GTPase superfamily. Classic translation factor GTPase family. LepA subfamily.

The protein resides in the cell membrane. It carries out the reaction GTP + H2O = GDP + phosphate + H(+). Functionally, required for accurate and efficient protein synthesis under certain stress conditions. May act as a fidelity factor of the translation reaction, by catalyzing a one-codon backward translocation of tRNAs on improperly translocated ribosomes. Back-translocation proceeds from a post-translocation (POST) complex to a pre-translocation (PRE) complex, thus giving elongation factor G a second chance to translocate the tRNAs correctly. Binds to ribosomes in a GTP-dependent manner. In Streptococcus agalactiae serotype Ia (strain ATCC 27591 / A909 / CDC SS700), this protein is Elongation factor 4.